We begin with the raw amino-acid sequence, 441 residues long: Probable cytosolic Fe-S cluster assembly factor v1g210509 (441 aa).

Cys24, Cys72, Cys75, Cys78, Cys196, Cys252, and Cys401 together coordinate [4Fe-4S] cluster.

The protein belongs to the NARF family.

Functionally, component of the cytosolic iron-sulfur (Fe/S) protein assembly machinery. Required for maturation of extramitochondrial Fe/S proteins. The sequence is that of Probable cytosolic Fe-S cluster assembly factor v1g210509 from Nematostella vectensis (Starlet sea anemone).